A 313-amino-acid chain; its full sequence is Tyrosine recombinase XerC (313 aa).

The Core-binding (CB) domain maps to 11 to 97 (NSLQKPLERF…SLRSFFDFLI (87 aa)). Positions 118 to 298 (PLPKNLDVDE…DFQHLAQAYD (181 aa)) constitute a Tyr recombinase domain. Active-site residues include R157, K181, H250, R253, and H276. Y285 serves as the catalytic O-(3'-phospho-DNA)-tyrosine intermediate.

This sequence belongs to the 'phage' integrase family. XerC subfamily. In terms of assembly, forms a cyclic heterotetrameric complex composed of two molecules of XerC and two molecules of XerD.

The protein localises to the cytoplasm. Its function is as follows. Site-specific tyrosine recombinase, which acts by catalyzing the cutting and rejoining of the recombining DNA molecules. The XerC-XerD complex is essential to convert dimers of the bacterial chromosome into monomers to permit their segregation at cell division. It also contributes to the segregational stability of plasmids. This chain is Tyrosine recombinase XerC, found in Vibrio campbellii (strain ATCC BAA-1116).